The sequence spans 283 residues: MAISAAQVKELRDRTGAGMMDCKKALEETNGDMELAIDNMRKSGAAKAAKKAGNIAADGTILIKNGEGFAVLLEVNCQTDFVAKDANFLGFANSVLDVAAASKVALEDLKAQFEEARVALVAKIGENINVRRVEYIDGAKLASYRHGERIGVVVTGDADDETLKHIAMHVAASKPEYVNPEDVPADVVAREQALQIEISMNEGKPADIAEKMVVGRMKKFTGEISLTGQAYIMEPKKTVGEFLKEKGAKVTNFIRLEVGEGIEKKEEDFAAEVAAQIAASKKA.

The segment at 79–82 is involved in Mg(2+) ion dislocation from EF-Tu; the sequence is TDFV.

The protein belongs to the EF-Ts family.

The protein localises to the cytoplasm. Its function is as follows. Associates with the EF-Tu.GDP complex and induces the exchange of GDP to GTP. It remains bound to the aminoacyl-tRNA.EF-Tu.GTP complex up to the GTP hydrolysis stage on the ribosome. The sequence is that of Elongation factor Ts from Shewanella putrefaciens (strain CN-32 / ATCC BAA-453).